The primary structure comprises 934 residues: Protein translocase subunit SecA (934 aa).

Residues Gln90, 108 to 112 (GEGKT), and Asp509 each bind ATP. The interval 535 to 565 (PEEDHTPPVPLQRSAPGGFSDAAAPSLPRSG) is disordered.

Belongs to the SecA family. Monomer and homodimer. Part of the essential Sec protein translocation apparatus which comprises SecA, SecYEG and auxiliary proteins SecDF. Other proteins may also be involved.

It localises to the cell inner membrane. It is found in the cellular thylakoid membrane. The protein localises to the cytoplasm. The enzyme catalyses ATP + H2O + cellular proteinSide 1 = ADP + phosphate + cellular proteinSide 2.. In terms of biological role, part of the Sec protein translocase complex. Interacts with the SecYEG preprotein conducting channel. Has a central role in coupling the hydrolysis of ATP to the transfer of proteins into and across the cell membrane, serving as an ATP-driven molecular motor driving the stepwise translocation of polypeptide chains across the membrane. Probably participates in protein translocation into and across both the cytoplasmic and thylakoid membranes in cyanobacterial cells. This chain is Protein translocase subunit SecA, found in Synechococcus sp. (strain CC9605).